Consider the following 370-residue polypeptide: Spermidine/putrescine import ATP-binding protein PotA (370 aa).

An ABC transporter domain is found at 11–241 (IELRSITKSY…PKNLFVAKFI (231 aa)). 43 to 50 (GPSGCGKT) serves as a coordination point for ATP.

Belongs to the ABC transporter superfamily. Spermidine/putrescine importer (TC 3.A.1.11.1) family. As to quaternary structure, the complex is composed of two ATP-binding proteins (PotA), two transmembrane proteins (PotB and PotC) and a solute-binding protein (PotD).

Its subcellular location is the cell inner membrane. The catalysed reaction is ATP + H2O + polyamine-[polyamine-binding protein]Side 1 = ADP + phosphate + polyamineSide 2 + [polyamine-binding protein]Side 1.. In terms of biological role, part of the ABC transporter complex PotABCD involved in spermidine/putrescine import. Responsible for energy coupling to the transport system. This Pasteurella multocida (strain Pm70) protein is Spermidine/putrescine import ATP-binding protein PotA.